The sequence spans 469 residues: 3-isopropylmalate dehydratase large subunit (469 aa).

[4Fe-4S] cluster contacts are provided by Cys347, Cys408, and Cys411.

Belongs to the aconitase/IPM isomerase family. LeuC type 1 subfamily. In terms of assembly, heterodimer of LeuC and LeuD. It depends on [4Fe-4S] cluster as a cofactor.

It catalyses the reaction (2R,3S)-3-isopropylmalate = (2S)-2-isopropylmalate. Its pathway is amino-acid biosynthesis; L-leucine biosynthesis; L-leucine from 3-methyl-2-oxobutanoate: step 2/4. Catalyzes the isomerization between 2-isopropylmalate and 3-isopropylmalate, via the formation of 2-isopropylmaleate. The polypeptide is 3-isopropylmalate dehydratase large subunit (Actinobacillus pleuropneumoniae serotype 3 (strain JL03)).